The primary structure comprises 391 residues: Multidrug resistance protein MdtL (391 aa).

A run of 12 helical transmembrane segments spans residues 4–24 (FLICSFALVLLYPAGIDMYLV), 42–62 (IAFSVYLAGMAAAMLFAGKVA), 69–89 (PVAIPGAALFIIASVFCSLAE), 93–113 (LFLAGRFLQGLGAGCCYVVAF), 131–151 (LLNGITCIIPVLAPVLGHLIM), 158–178 (SLFWTMATMGIAVLMLSLFIL), 203–222 (FFLSRVVITTLSVSVILTFV), 245–265 (ALTAGVSMTVSFSTPFALGIF), 269–289 (TLMITSQVLFLAAGITLAVSP), 293–313 (VSLFGITLICAGFSVGFGVAM), 331–351 (LGIAQVCGSSLWIWLAAVVGI), and 356–376 (MLIGILIACSIVSLLLIMFVA).

This sequence belongs to the major facilitator superfamily. DHA1 family. MdtL (TC 2.A.1.2.22) subfamily.

The protein localises to the cell inner membrane. Its function is as follows. Confers resistance to chloramphenicol. This is Multidrug resistance protein MdtL from Escherichia coli O127:H6 (strain E2348/69 / EPEC).